The following is a 174-amino-acid chain: UPF0664 stress-induced protein C29B12.11c (174 aa).

A disordered region spans residues His-147–Ser-174. Residues Pro-165–Ser-174 are compositionally biased toward basic and acidic residues.

This sequence belongs to the UPF0664 family.

The protein resides in the cytoplasm. It localises to the nucleus. The protein is UPF0664 stress-induced protein C29B12.11c of Schizosaccharomyces pombe (strain 972 / ATCC 24843) (Fission yeast).